The primary structure comprises 299 residues: Taste receptor type 2 member 16 (299 aa).

Topologically, residues 1–5 are extracellular; sequence MVPTQ. A helical membrane pass occupies residues 6–26; it reads VTIFSIIMYVLESLVIIVQSC. Over 27-44 the chain is Cytoplasmic; it reads TTVAVLFREWMHFQRLSP. Residues 45–65 traverse the membrane as a helical segment; the sequence is VEIILISLGISHFCLQWTSML. At 66 to 82 the chain is on the extracellular side; sequence YNFGTYSRPVLLFWKVS. The helical transmembrane segment at 83 to 103 threads the bilayer; the sequence is VVWEFMNVLTFWLTSLLAVLY. Over 104–125 the chain is Cytoplasmic; sequence CVKVSSFSHPVFLWLRLKILKL. The helical transmembrane segment at 126–146 threads the bilayer; sequence VLWLLLGALIASCLSIIPSVV. The Extracellular portion of the chain corresponds to 147-183; sequence KYHIQMELLTLDHLPKNSSLILRLQMFEWYFSNPFKM. The N-linked (GlcNAc...) asparagine glycan is linked to asparagine 163. The helical transmembrane segment at 184 to 204 threads the bilayer; sequence IGFGVPFLVFLISIILLTVSL. Residues 205-233 lie on the Cytoplasmic side of the membrane; that stretch reads VQHWGQMKHYSSSSSSLRAQCTVLKSLAT. Residues 234–254 traverse the membrane as a helical segment; it reads FFIFFTSYFLTIVVSFIGTVF. Over 255 to 258 the chain is Extracellular; it reads DKKS. Residues 259–279 traverse the membrane as a helical segment; sequence WFWVCEAVIYGLVCIHFTSLM. The Cytoplasmic segment spans residues 280–299; sequence MSNPTLKKALRLQFWSPESS.

It belongs to the G-protein coupled receptor T2R family. As to quaternary structure, interacts with RTP3 and RTP4. In terms of tissue distribution, expressed in subsets of taste receptor cells of the tongue and palate epithelium and exclusively in gustducin-positive cells. Expressed in the antrum and fundus (part of the stomach), duodenum and in gastric endocrine cells.

Its subcellular location is the cell membrane. In terms of biological role, gustducin-coupled receptor implicated in the perception of bitter compounds in the oral cavity and the gastrointestinal tract. Signals through PLCB2 and the calcium-regulated cation channel TRPM5. In Rattus norvegicus (Rat), this protein is Taste receptor type 2 member 16 (Tas2r16).